A 338-amino-acid chain; its full sequence is Nucleoid-associated protein CGSHiGG_07705 (338 aa).

The protein belongs to the YejK family.

It is found in the cytoplasm. It localises to the nucleoid. The polypeptide is Nucleoid-associated protein CGSHiGG_07705 (Haemophilus influenzae (strain PittGG)).